The primary structure comprises 101 residues: Threonine-rich inner membrane protein GfcA (101 aa).

The first 21 residues, 1 to 21 (MKHKLSAILMAFMLTTPAAFA), serve as a signal peptide directing secretion. Residues 22 to 59 (APEATNGTEATTGTTGTTTTTTGATTTATTTGGVAAGA) lie on the Cytoplasmic side of the membrane. A disordered region spans residues 24–45 (EATNGTEATTGTTGTTTTTTGA). Residues 60 to 80 (VGTATVVGVATAVGVATLAVV) traverse the membrane as a helical segment. Residues 81–101 (AANDSGDGGSHNTSTTTSTTR) are Periplasmic-facing. A disordered region spans residues 82–101 (ANDSGDGGSHNTSTTTSTTR).

Its subcellular location is the cell inner membrane. This Escherichia coli (strain K12) protein is Threonine-rich inner membrane protein GfcA (gfcA).